The chain runs to 174 residues: Inactive protein RESTRICTED TEV MOVEMENT 1 (174 aa).

Positions 1 to 152 (MKIGPVGKHD…LQYIGVYLRP (152 aa)) constitute a Jacalin-type lectin domain.

The protein belongs to the jacalin lectin family. In terms of assembly, self-interacts. Interacts with RTM3.

It is found in the cytoplasm. Unable to mediate restriction of long-distance movement of the pathogenic tobacco etch virus (TEV) without causing a hypersensitive response or inducing systemic acquired resistance. This Arabidopsis thaliana (Mouse-ear cress) protein is Inactive protein RESTRICTED TEV MOVEMENT 1 (RTM1).